A 388-amino-acid chain; its full sequence is Chorismate synthase (388 aa).

NADP(+) is bound by residues Arg39 and Arg45. FMN is bound by residues 130 to 132 (RSS), 251 to 252 (NA), Gly296, 311 to 315 (KPIPT), and Arg337.

This sequence belongs to the chorismate synthase family. Homotetramer. Requires FMNH2 as cofactor.

It catalyses the reaction 5-O-(1-carboxyvinyl)-3-phosphoshikimate = chorismate + phosphate. The protein operates within metabolic intermediate biosynthesis; chorismate biosynthesis; chorismate from D-erythrose 4-phosphate and phosphoenolpyruvate: step 7/7. Its function is as follows. Catalyzes the anti-1,4-elimination of the C-3 phosphate and the C-6 proR hydrogen from 5-enolpyruvylshikimate-3-phosphate (EPSP) to yield chorismate, which is the branch point compound that serves as the starting substrate for the three terminal pathways of aromatic amino acid biosynthesis. This reaction introduces a second double bond into the aromatic ring system. The chain is Chorismate synthase from Streptococcus pyogenes serotype M49 (strain NZ131).